The chain runs to 176 residues: Protein FAM89A (176 aa).

Residues aspartate 140 to histidine 165 are disordered.

The protein belongs to the FAM89 family.

In Rattus norvegicus (Rat), this protein is Protein FAM89A (Fam89a).